The following is a 421-amino-acid chain: Histidine--tRNA ligase (421 aa).

This sequence belongs to the class-II aminoacyl-tRNA synthetase family. As to quaternary structure, homodimer.

Its subcellular location is the cytoplasm. The enzyme catalyses tRNA(His) + L-histidine + ATP = L-histidyl-tRNA(His) + AMP + diphosphate + H(+). This chain is Histidine--tRNA ligase, found in Coxiella burnetii (strain Dugway 5J108-111).